The chain runs to 182 residues: ATP synthase subunit b, chloroplastic (182 aa).

A helical transmembrane segment spans residues 29–47 (IINLALLIVLVINVAKDVL).

The protein belongs to the ATPase B chain family. In terms of assembly, F-type ATPases have 2 components, F(1) - the catalytic core - and F(0) - the membrane proton channel. F(1) has five subunits: alpha(3), beta(3), gamma(1), delta(1), epsilon(1). F(0) has four main subunits: a(1), b(1), b'(1) and c(10-14). The alpha and beta chains form an alternating ring which encloses part of the gamma chain. F(1) is attached to F(0) by a central stalk formed by the gamma and epsilon chains, while a peripheral stalk is formed by the delta, b and b' chains.

The protein resides in the plastid. It localises to the chloroplast thylakoid membrane. Functionally, f(1)F(0) ATP synthase produces ATP from ADP in the presence of a proton or sodium gradient. F-type ATPases consist of two structural domains, F(1) containing the extramembraneous catalytic core and F(0) containing the membrane proton channel, linked together by a central stalk and a peripheral stalk. During catalysis, ATP synthesis in the catalytic domain of F(1) is coupled via a rotary mechanism of the central stalk subunits to proton translocation. Component of the F(0) channel, it forms part of the peripheral stalk, linking F(1) to F(0). The sequence is that of ATP synthase subunit b, chloroplastic from Heterosigma akashiwo (strain NIES-293 / 8280G21-1).